A 90-amino-acid chain; its full sequence is Small ribosomal subunit protein uS15 (90 aa).

Belongs to the universal ribosomal protein uS15 family. As to quaternary structure, part of the 30S ribosomal subunit. Forms a bridge to the 50S subunit in the 70S ribosome, contacting the 23S rRNA.

In terms of biological role, one of the primary rRNA binding proteins, it binds directly to 16S rRNA where it helps nucleate assembly of the platform of the 30S subunit by binding and bridging several RNA helices of the 16S rRNA. Its function is as follows. Forms an intersubunit bridge (bridge B4) with the 23S rRNA of the 50S subunit in the ribosome. This is Small ribosomal subunit protein uS15 from Mycoplasmoides gallisepticum (strain R(low / passage 15 / clone 2)) (Mycoplasma gallisepticum).